Here is a 309-residue protein sequence, read N- to C-terminus: Methionyl-tRNA formyltransferase (309 aa).

Residue 107–110 (SLLP) participates in (6S)-5,6,7,8-tetrahydrofolate binding.

The protein belongs to the Fmt family.

It carries out the reaction L-methionyl-tRNA(fMet) + (6R)-10-formyltetrahydrofolate = N-formyl-L-methionyl-tRNA(fMet) + (6S)-5,6,7,8-tetrahydrofolate + H(+). In terms of biological role, attaches a formyl group to the free amino group of methionyl-tRNA(fMet). The formyl group appears to play a dual role in the initiator identity of N-formylmethionyl-tRNA by promoting its recognition by IF2 and preventing the misappropriation of this tRNA by the elongation apparatus. In Borrelia hermsii (strain HS1 / DAH), this protein is Methionyl-tRNA formyltransferase.